The sequence spans 600 residues: MTNKLDCLKLINFIEKSNLFTTNKIRDKKLLIAFSGGQDSSCLLTIFYILSKKWGFKLGAVYCNHCWTDSPQSSLSAFDTLQMFDIPFYFVESPNSEPMKPEQKARDWRYSSFYTISKWEDYDFVLTGHSLSDCVETVLFNLFRGSGLKGICSLKEDQKFSNLKTNDFFFQKTVCFLDPFFYFSDKKGNPFFRKYRLFQSMSFLSIFPKFDFFAFGENCAIDKSNFPLKNKSKGKNLQFLTSFDIKNWFGIKKICRFCFLDKIGQTGIKKKRGTNRVPILIFSRRVNKTTSPLALNFQTKNKRVDRKSFLFRFSLAFALPLAFALRAKGEKVRKNALLNQIKPVSFFFKTKKDKTETNLFHRYLQTIKKLQNRDKISSFITIFRPFILTLGNVKIKGKKIKNKNLPFQIKKLIRKKEKEKGILWNSLSKLDNKDKLISNQIQKKGFKLIPKFILTKDKKSFSNFPPFIFDQLEKTFRKEKVDTKPRNSSPQFEVLFNKLSQPSSDKKNVDFIVFRPLIKITRETLFLFSNNLKIPIYYDKSNKDLNITRNYIRKVLVPLLKKINPRVEENIYKFSKIIEFYYQVFGDLKCPSDRFDIFNP.

ATP is bound at residue 35 to 40; the sequence is SGGQDS.

Belongs to the tRNA(Ile)-lysidine synthase family.

Its subcellular location is the plastid. It localises to the chloroplast. The catalysed reaction is cytidine(34) in tRNA(Ile2) + L-lysine + ATP = lysidine(34) in tRNA(Ile2) + AMP + diphosphate + H(+). Ligates lysine onto the cytidine present at position 34 of the AUA codon-specific tRNA(Ile) that contains the anticodon CAU, in an ATP-dependent manner. Cytidine is converted to lysidine, thus changing the amino acid specificity of the tRNA from methionine to isoleucine. The chain is tRNA(Ile)-lysidine synthase, chloroplastic from Tupiella akineta (Green alga).